We begin with the raw amino-acid sequence, 1097 residues long: UPF0746 protein DDB_G0281095 (1097 aa).

A compositionally biased stretch (basic and acidic residues) spans 1–11 (MVNNNKRKEIE). Residues 1-24 (MVNNNKRKEIENQENDNDDDNDGL) form a disordered region. The segment covering 12-22 (NQENDNDDDND) has biased composition (acidic residues). In terms of domain architecture, SAP spans 35–69 (YDSIRSKELQTIAKSLGLPNNGKKQEVYKRIEGYF). Residues 329-521 (FKEIREIHQQ…QLILELNEIQ (193 aa)) are a coiled coil.

This sequence belongs to the UPF0746 family.

This is UPF0746 protein DDB_G0281095 from Dictyostelium discoideum (Social amoeba).